Reading from the N-terminus, the 693-residue chain is C6 finger domain transcription factor nscR (693 aa).

Residues 17–43 (CELCRERKVKCDKLDPCTNCSSAGVIC) constitute a DNA-binding region (zn(2)-C6 fungal-type). Residues 589 to 608 (AANTLSVPHTPPSRSSITSS) are disordered.

Its subcellular location is the nucleus. In terms of biological role, transcription factor that specifically regulates the neosartoricin B biosynthesis gene cluster. This chain is C6 finger domain transcription factor nscR, found in Trichophyton rubrum (strain ATCC MYA-4607 / CBS 118892) (Athlete's foot fungus).